Consider the following 1853-residue polypeptide: Cellulosomal-scaffolding protein A (1853 aa).

The first 28 residues, 1-28 (MRKVISMLLVVAMLTTIFAAMIPQTVSA), serve as a signal peptide directing secretion. 2 consecutive Cohesin domains span residues 29–182 (ATMT…VPSD) and 183–322 (GVVV…VNVG). Linker (Pro/Thr-rich) stretches follow at residues 323–363 (NATP…PANT) and 523–559 (GGSV…SDDP). A compositionally biased stretch (low complexity) spans 323–364 (NATPTKGATPTNTATPTKSATATPTRPSVPTNTPTNTPANTP). Disordered stretches follow at residues 323 to 367 (NATP…PVSG) and 525 to 559 (SVVP…SDDP). The 159-residue stretch at 365–523 (VSGNLKVEFY…GVLVWGKEPG (159 aa)) folds into the CBM3 domain. The span at 525-555 (SVVPSTQPVTTPPATTKPPATTKPPATTIPP) shows a compositional bias: low complexity. 7 consecutive Cohesin domains span residues 560–704 (NAIK…NVGD), 724–866 (AVRI…VNVG), 889–1031 (AVRI…VNVG), 1054–1196 (AVRI…VNVG), 1219–1361 (AVRI…VNVG), 1384–1526 (AVRI…VNVG), and 1548–1690 (KLTL…VLVT). In terms of domain architecture, Dockerin spans 1785–1852 (IMMWVGDIVK…FGATSSDYDA (68 aa)).

In terms of processing, O-glycosylated on most but not all Thr residues of the linker units. The reducing sugar is galactopyranose.

It localises to the secreted. In terms of biological role, acts as a scaffolding protein in the cellulosome. It promotes binding of cellulose to the catalytic domains of the cellulolytic enzymes. This Acetivibrio thermocellus (strain ATCC 27405 / DSM 1237 / JCM 9322 / NBRC 103400 / NCIMB 10682 / NRRL B-4536 / VPI 7372) (Clostridium thermocellum) protein is Cellulosomal-scaffolding protein A (cipA).